The following is a 1793-amino-acid chain: Non-reducing polyketide synthase adaA (1793 aa).

An N-terminal acylcarrier protein transacylase domain (SAT) region spans residues 16–250; that stretch reads NDDLKALFRG…YSKSLALPVY (235 aa). The region spanning 388–821 is the Ketosynthase family 3 (KS3) domain; sequence DSKLAIVGMA…GGNTTLVLED (434 aa). Active-site for beta-ketoacyl synthase activity residues include Cys561, His696, and His739. A malonyl-CoA:ACP transacylase (MAT) domain region spans residues 923–1245; sequence VFTFTGQGAY…KSLCTLHLAG (323 aa). The interval 1312–1634 is product template (PT) domain; that stretch reads TSLIHQVTEE…RLLMDRFFSP (323 aa). Positions 1316-1452 are N-terminal hotdog fold; sequence HQVTEETVDK…GSIKYPADPT (137 aa). The 314-residue stretch at 1316–1629 folds into the PKS/mFAS DH domain; it reads HQVTEETVDK…FRRVPRLLMD (314 aa). The Proton acceptor; for dehydratase activity role is filled by His1348. The C-terminal hotdog fold stretch occupies residues 1482 to 1629; that stretch reads KASTLSKPLA…FRRVPRLLMD (148 aa). Asp1540 serves as the catalytic Proton donor; for dehydratase activity. Positions 1642-1659 are enriched in low complexity; that stretch reads AAPAPAPAAVPAVKKQPP. A disordered region spans residues 1642-1714; that stretch reads AAPAPAPAAV…TTEQEAPVAD (73 aa). Positions 1660 to 1681 are enriched in polar residues; sequence TETIQPQAPKTEQKQDQLQLPN. Low complexity predominate over residues 1683-1706; sequence ASAAPSTANSSSSPSSSGVATPTT. One can recognise a Carrier domain in the interval 1716–1793; that stretch reads SAVTGVAGKC…DLTGWLEQYC (78 aa). Ser1753 bears the O-(pantetheine 4'-phosphoryl)serine mark.

Pantetheine 4'-phosphate is required as a cofactor.

The enzyme catalyses holo-[ACP] + 9 malonyl-CoA + acetyl-CoA + 9 H(+) = 3-(2,4-dioxopentyl)-3,6,8,9-tetrahydroxy-1-oxo-1,2,3,4-tetrahydroanthracene-2-carboxyl-[ACP] + 9 CO2 + 10 CoA + 2 H2O. Its pathway is secondary metabolite biosynthesis. Its function is as follows. Non-reducing polyketide synthase; part of the gene cluster that mediates the biosynthesis of the linear tetracyclic TAN-1612 neuropeptide Y receptor antagonist. The decaketide backbone of TAN-1612 is synthesized by the non-reducing polyketide synthase adaA via condensation of one acetyl-CoA starter unit with 9 malonyl-CoA units. The FAD-dependent monooxygenase adaC then performs hydroxylation at C2 while the polaketide chain is still attached to the NRPKS adaA. The alpha-hydroxylation step at C2 appears to be crucial for the following C18-C1 Claisen cyclization and release of the C9-hydroxyl version of TAN-1612 from the NRPKS adaA, two steps performed by the lactamase-like protein adaB. Finally, the O-methyltransferase adaD performs the C9 O-methylation to complete the biosynthesis of TAN-1612. The sequence is that of Non-reducing polyketide synthase adaA from Aspergillus niger (strain ATCC MYA-4892 / CBS 513.88 / FGSC A1513).